The chain runs to 364 residues: Gap junction delta-4 protein (364 aa).

Residues Met-1–Thr-19 are Cytoplasmic-facing. A helical membrane pass occupies residues Ile-20–Ala-40. At Gly-41–Arg-76 the chain is on the extracellular side. Residues Phe-77–Leu-97 form a helical membrane-spanning segment. Residues His-98–Arg-128 are Cytoplasmic-facing. A helical transmembrane segment spans residues Met-129–Ala-149. Topologically, residues Arg-150 to Ser-173 are extracellular. Residues Leu-174 to Leu-194 traverse the membrane as a helical segment. At Leu-195 to Val-364 the chain is on the cytoplasmic side. Residues His-331 to Lys-340 are compositionally biased toward polar residues. The segment at His-331–Val-364 is disordered.

This sequence belongs to the connexin family. Delta-type subfamily. As to quaternary structure, a connexon is composed of a hexamer of connexins.

It localises to the cell membrane. The protein localises to the cell junction. Its subcellular location is the gap junction. One gap junction consists of a cluster of closely packed pairs of transmembrane channels, the connexons, through which materials of low MW diffuse from one cell to a neighboring cell. The polypeptide is Gap junction delta-4 protein (Gjd4) (Mus musculus (Mouse)).